The following is a 106-amino-acid chain: Thioredoxin (106 aa).

In terms of domain architecture, Thioredoxin spans 2-106; sequence VNFLKTKADF…GLREKIKKNK (105 aa). Catalysis depends on nucleophile residues C32 and C35. A disulfide bridge connects residues C32 and C35.

Belongs to the thioredoxin family.

It localises to the cytoplasm. Participates in various redox reactions through the reversible oxidation of its active center dithiol to a disulfide and catalyzes dithiol-disulfide exchange reactions. This chain is Thioredoxin (THIO), found in Geodia cydonium (Sponge).